A 443-amino-acid chain; its full sequence is UDP-N-acetylmuramate--L-alanine ligase (443 aa).

110–116 (GAHGKTS) is a binding site for ATP.

Belongs to the MurCDEF family.

The protein localises to the cytoplasm. The catalysed reaction is UDP-N-acetyl-alpha-D-muramate + L-alanine + ATP = UDP-N-acetyl-alpha-D-muramoyl-L-alanine + ADP + phosphate + H(+). The protein operates within cell wall biogenesis; peptidoglycan biosynthesis. Cell wall formation. The chain is UDP-N-acetylmuramate--L-alanine ligase from Streptococcus agalactiae serotype III (strain NEM316).